We begin with the raw amino-acid sequence, 216 residues long: Acetate CoA-transferase subunit beta (216 aa).

Residue Glu46 is part of the active site.

This sequence belongs to the 3-oxoacid CoA-transferase subunit B family. Heterotetramer composed of two alpha subunits (AtoD) and two beta subunits (AtoA).

It localises to the cytoplasm. The enzyme catalyses an acyl-CoA + acetate = a carboxylate + acetyl-CoA. The catalysed reaction is acetoacetate + acetyl-CoA = acetoacetyl-CoA + acetate. It carries out the reaction butanoate + acetyl-CoA = butanoyl-CoA + acetate. It catalyses the reaction acetoacetate + butanoyl-CoA = acetoacetyl-CoA + butanoate. The protein operates within lipid metabolism; short-chain fatty acid metabolism. With respect to regulation, inhibited by p-chloromercuribenzoate. In terms of biological role, coenzyme A transferase which is involved in short-chain fatty acid degradation and catalyzes the activation of short-chain fatty acids to their respective CoA thiolesters. During acetoacetate degradation, catalyzes the transfer of CoA from acetyl-CoA to acetoacetate by a mechanism involving a covalent enzyme-CoA compound as a reaction intermediate. Utilizes a variety of short chain acyl-CoA and carboxylic acid substrates but exhibits maximal activity with normal and 3-keto substrates. This is Acetate CoA-transferase subunit beta from Escherichia coli (strain K12).